The primary structure comprises 327 residues: Aldo-keto reductase family 7 member A3 (327 aa).

Ser-2 bears the Phosphoserine mark. NADP(+) contacts are provided by Met-13, Arg-18, and Asp-40. The active-site Proton donor is the Tyr-45. His-109 provides a ligand contact to citrate. NADP(+) is bound by residues Asn-140, Asn-194, Leu-196, Gly-198, Arg-204, and Arg-218. Citrate-binding residues include Tyr-228 and Arg-231. Positions 286, 290, 293, 294, and 327 each coordinate NADP(+).

This sequence belongs to the aldo/keto reductase family. Aldo/keto reductase 2 subfamily. As to quaternary structure, homodimer. Heterodimer with AKR7A2.

It is found in the cytoplasm. The enzyme catalyses a primary alcohol + NADP(+) = an aldehyde + NADPH + H(+). It catalyses the reaction aflatoxin B1 dialdehyde + NADPH + H(+) = aflatoxin B1 C(6a)-monoaldehyde + NADP(+). It carries out the reaction aflatoxin B1 dialdehyde + NADPH + H(+) = aflatoxin B1 C(8)-monoaldehyde + NADP(+). The catalysed reaction is aflatoxin B1 C(6a)-monoaldehyde + NADPH + 2 H(+) = aflatoxin B1 triol + NADP(+). With respect to regulation, inhibited by citrate. Functionally, catalyzes the NADPH-dependent reduction of various carbonyl-containing compounds, including aldehydes, ketones, and toxic products from cellular metabolism or environmental exposure. Can reduce the dialdehyde form of aflatoxin B1 (AFB1) into alcohol derivatives, via monoaldehydes intermediates, thus preventing the formation of protein adducts that contribute to AFB1-induced toxicity. This Rattus norvegicus (Rat) protein is Aldo-keto reductase family 7 member A3.